A 1235-amino-acid chain; its full sequence is JNK-interacting protein 3 (1235 aa).

Residues 1-22 are disordered; it reads MMDNDDALLNNGGPQSGAETVY. Positions 25–113 constitute an RH1 domain; it reads EDNNMVMSEK…VTQYEREKSA (89 aa). Residues 84-184 adopt a coiled-coil conformation; that stretch reads RINQEQDVEL…NKLHERYTEL (101 aa). Residues 278–325 form a disordered region; that stretch reads GAATDSLQQQHQATSPQSPPDTSPVVPNVPPANVGRSTTKKEQRSDNN. Over residues 282 to 293 the composition is skewed to polar residues; sequence DSLQQQHQATSP. Pro residues predominate over residues 294–307; sequence QSPPDTSPVVPNVP. A coiled-coil region spans residues 366–493; sequence GKEVENLIME…AVRLTEILRA (128 aa). One can recognise an RH2 domain in the interval 456–526; sequence RKRFTRVEMA…TPSNRPTERI (71 aa). Disordered stretches follow at residues 520-572, 813-852, and 869-897; these read NRPT…MHPA, KPKSEDEQNSNSKPQQQQQDEEEAKEATEKSNEPLPPVNA, and PGAPQRLSSGNSGSDGNQANNNNSSSTGS. The span at 529 to 543 shows a compositional bias: gly residues; it reads GLGGGPMFRNTGGGS. Low complexity-rich tracts occupy residues 544 to 555 and 821 to 830; these read PAHSHGSPSRGS and NSNSKPQQQQ. A compositionally biased stretch (polar residues) spans 874–897; it reads RLSSGNSGSDGNQANNNNSSSTGS.

It belongs to the JIP scaffold family. Forms homo- and heterooligomeric complexes. Binds the TPR motif-containing C-terminal of kinesin light chain, Klc. Pre-assembled syd scaffolding complexes are then transported as a cargo of kinesin, to the required subcellular location.

It is found in the cytoplasm. The JNK-interacting protein (JIP) group of scaffold proteins selectively mediates JNK-signaling by aggregating specific components of the MAPK cascade to form a functional JNK signaling module. May function as a regulator of vesicle transport, through interactions with the JNK-signaling components and motor proteins. Syd is required for efficient kinesin-I mediated axonal transport. The sequence is that of JNK-interacting protein 3 from Drosophila pseudoobscura pseudoobscura (Fruit fly).